A 140-amino-acid polypeptide reads, in one-letter code: Transcriptional regulator YdaT (140 aa).

Transcriptional regulator that causes a severe detrimental growth effect and reduces cell viability. When expressed, it alters expression of a variety of bacterial regulons normally controlled by the transcriptional regulatory protein RcsA, resulting in deficient lipopolysaccharide biosynthesis and cell division. YdaT has no effect on Rac prophage excision. Overexpression of ydaST reduces growth and leads to loss of cell viability. May contribute to toxicity and morphological defects. The sequence is that of Transcriptional regulator YdaT (ydaT) from Escherichia coli (strain K12).